The chain runs to 394 residues: Alpha-2B adrenergic receptor (394 aa).

Residues 1–25 (AIAAVITFLILFTIFGNALVILAVL) traverse the membrane as a helical segment. The Cytoplasmic portion of the chain corresponds to 26–36 (TSRSLRAPQNL). The helical transmembrane segment at 37 to 62 (FLVSLAAADILVATLIIPFSLANELL) threads the bilayer. Residues 63-72 (GYWYFRRTWC) are Extracellular-facing. A disulfide bridge links Cys-72 with Cys-151. A helical transmembrane segment spans residues 73 to 95 (EVYLALDVLFCTSSIVHLCAISL). Over 96-117 (DRYWAVSRALEYNCKRTPRRIK) the chain is Cytoplasmic. The chain crosses the membrane as a helical span at residues 118-140 (CIILTVWLIAAAISLPPLIYKGD). At 141 to 156 (QGPQPHGAPQCKLNQE) the chain is on the extracellular side. The chain crosses the membrane as a helical span at residues 157-180 (AWYILSSSLGSFFVPCLIMILVYL). Residues 181–358 (RIYLIAKRSH…LSREKRFTFV (178 aa)) lie on the Cytoplasmic side of the membrane. Residues 191-318 (RRGPRAKGGP…GSPPLQQPQG (128 aa)) are disordered. Residues 281–298 (LEEEAEEEEEEEEEEDEP) are compositionally biased toward acidic residues. Positions 299–312 (QAVPVSPASVGSPP) are enriched in low complexity. Residues 359-382 (LAVVIGVFVLCWFPFFFSYSLSAI) traverse the membrane as a helical segment. The Extracellular segment spans residues 383-391 (CPQQCRVPH). Residues 392-394 (GLF) traverse the membrane as a helical segment.

This sequence belongs to the G-protein coupled receptor 1 family. Adrenergic receptor subfamily. ADRA2B sub-subfamily. In terms of assembly, interacts with RAB26. Interacts with PPP1R9B. Interacts with GGA1, GGA2 and GGA3.

The protein resides in the cell membrane. Its function is as follows. Alpha-2 adrenergic receptors mediate the catecholamine-induced inhibition of adenylate cyclase through the action of G proteins. The polypeptide is Alpha-2B adrenergic receptor (ADRA2B) (Oryctolagus cuniculus (Rabbit)).